Here is a 1348-residue protein sequence, read N- to C-terminus: Adhesion G protein-coupled receptor F5 (1348 aa).

A signal peptide spans 1-21; the sequence is MRSPRTFTFYFLLLVICSSEA. At 22–1019 the chain is on the extracellular side; sequence ALSTPTEPIV…LKILLDIISY (998 aa). Residues 163–271 enclose the SEA domain; sequence PEAFITLKLK…NSFQGTPSNE (109 aa). 3 consecutive Ig-like domains span residues 268–366, 367–464, and 469–559; these read PSNE…LDVT, PIRI…IAVT, and ANLT…KDVT. Asn270, Asn286, Asn337, and Asn349 each carry an N-linked (GlcNAc...) asparagine glycan. Cys291 and Cys348 are joined by a disulfide. An intrachain disulfide couples Cys389 to Cys447. N-linked (GlcNAc...) asparagine glycosylation is found at Asn470, Asn538, and Asn665. The cysteines at positions 490 and 543 are disulfide-linked. Position 818 is a phosphoserine (Ser818). The 165-residue stretch at 841 to 1005 folds into the GAIN-B domain; it reads TPPFLAHPNV…SILMSPDSPD (165 aa). Disulfide bonds link Cys953–Cys987 and Cys972–Cys989. Residues 953 to 1005 are GPS; it reads CVFWNFSLANNTGGWDSSGCSVEDDGRDNRDRVFCKCNHLTSFSILMSPDSPD. The tethered agonist stretch occupies residues 993–1008; that stretch reads TSFSILMSPDSPDPGS. A helical membrane pass occupies residues 1020–1040; sequence IGLGFSIVSLAACLVVEAMVW. Over 1041-1055 the chain is Cytoplasmic; the sequence is KSVTKNRTSYMRHIC. The chain crosses the membrane as a helical span at residues 1056-1076; sequence IVNIAFCLLIADIWFIVAGAI. At 1077 to 1092 the chain is on the extracellular side; it reads HDGRYPLNETACVAAT. A helical membrane pass occupies residues 1093–1113; it reads FFIHFFYLSVFFWMLTLGLML. The Cytoplasmic portion of the chain corresponds to 1114 to 1130; it reads FYRLIFILHDASKSTQK. A helical membrane pass occupies residues 1131-1151; that stretch reads AIAFSLGYGCPLIISSITVGV. The Extracellular segment spans residues 1152 to 1175; it reads TQPQEVYMRKNACWLNWEDTRALL. Residues 1176-1196 form a helical membrane-spanning segment; it reads AFAIPALIIVVVNVSITVVVI. Residues 1197–1221 are Cytoplasmic-facing; the sequence is TKILRPSIGDKPGKQEKSSLFQISK. Residues 1222-1242 traverse the membrane as a helical segment; the sequence is SIGVLTPLLGLTWGFGLATVI. At 1243–1250 the chain is on the extracellular side; it reads QGSNAVFH. The helical transmembrane segment at 1251–1271 threads the bilayer; that stretch reads IIFTLLNAFQGLFILLFGCLW. The Cytoplasmic portion of the chain corresponds to 1272–1348; the sequence is DQKVQEALLH…NSSSAYSLLN (77 aa). Thr1302 is subject to Phosphothreonine. Ser1309 is subject to Phosphoserine. The interval 1328–1348 is disordered; it reads STPETTSSSLENSSSAYSLLN.

It belongs to the G-protein coupled receptor 2 family. Adhesion G-protein coupled receptor (ADGR) subfamily. In terms of assembly, homodimer; disulfide-linked. Heterodimer of 2 chains generated by proteolytic processing; the large extracellular N-terminal fragment and the membrane-bound C-terminal fragment predominantly remain associated and non-covalently linked. Fragment generates by the processing enzyme furin remains attached to the extracellular N-terminal fragment. Interacts (via N-terminal extracellular domain) with SFTPD. Highly glycosylated. In terms of processing, proteolytically cleaved at multiple sites: one in the GPS region of the GAIN-B domain (S1 site) and the other in the SEA domain (S2 site). The proteolytic cleavage at S1 site generates an extracellular subunit and a seven-transmembrane subunit. The proteolytic cleavage at S2 site generates a fragment that undergoes proteolytic cleavage by the processing enzyme furin. As to expression, widely expressed, with highest levels in lung, pancreas, kidney and heart. In the kidney, expressed more abundantly in the medulla than in the cortex, predominantly expressed in A-intercalated cells (at protein level). Expressed in endothelial cells from various tissues, including brain, heart, kidney, liver, lung and muscle. In the lung, expressed in alveolar type II (ATII) cells (at protein level). Expressed in pancreatic islets of Langerhans, predominantly in delta cells, as well as in endothelial cells. Expressed in white adipose tissue.

It localises to the cell membrane. As an adhesion G protein-coupled receptor (aGPCR) exhibits a large N-terminal extracellular domain containing highly conserved GPCR autoproteolysis-inducing (GAIN) domain. During synthesis, intracellular autoproteolytic processing of nascent chain within the GAIN domain generates a mature protein, consisting of an N-terminal fragment that is non-covalently linked to the C-terminal fragment. The mature protein is routed to the plasma membrane where the N- and C-terminal fragments remain associated, forming the holoreceptor. Dissociation of the aGPCR fragments stimulates G protein signaling through the action of the tethered-peptide agonist stalk that is occluded within the GAIN domain in the holoreceptor form. This dissociation might be induced by ligand binding, such as that of sFNDC4. Its function is as follows. Adhesion G protein-coupled receptor. In alveolar type II (ATII or AT2) cells, required for normal lung surfactant homeostasis. Modulation of both surfactant secretion and uptake by ATII cells is mediated by the downstream activation of GNAQ/GNA11 proteins and may be a consequence of increased cortical F-actin assembly induced by ADGRF5 activation. In the kidney, may play a role in the regulation of acid excretion into the primary urine, possibly by regulating the surface expression of V-ATPase proton pump. As a receptor for soluble FNDC4 (sFNDC4), required for proper systemic glucose tolerance, specifically sensitizing white adipose tissue to insulin. Also plays a role in sFNDC4-induced decrease of local inflammation in white adipose tissue. This Mus musculus (Mouse) protein is Adhesion G protein-coupled receptor F5 (Adgrf5).